The sequence spans 1327 residues: Vascular endothelial growth factor receptor 1 (1327 aa).

A signal peptide spans 1–24; that stretch reads MPRQLLSGTVLLGAAFLLAGSTSG. Over 25–749 the chain is Extracellular; that stretch reads SKLKVPVLSV…GTVERSNLEL (725 aa). 7 Ig-like C2-type domains span residues 30–121, 120–222, 227–323, 331–417, 424–545, 552–644, and 651–737; these read PVLS…SIVY, VYVF…HRET, DIKL…TTVI, NLKR…LTVT, PQIY…RNVS, PSGF…KDVS, and PALL…AYVT. N-linked (GlcNAc...) asparagine glycosylation is found at asparagine 48, asparagine 73, asparagine 82, asparagine 98, and asparagine 125. Residues cysteine 51 and cysteine 105 are joined by a disulfide bond. A disulfide bridge connects residues cysteine 154 and cysteine 203. N-linked (GlcNAc...) asparagine glycosylation is present at asparagine 247. Residues cysteine 248 and cysteine 307 are joined by a disulfide bond. 11 N-linked (GlcNAc...) asparagine glycosylation sites follow: asparagine 319, asparagine 383, asparagine 398, asparagine 409, asparagine 413, asparagine 470, asparagine 512, asparagine 543, asparagine 593, asparagine 615, and asparagine 663. Residues cysteine 450 and cysteine 531 are joined by a disulfide bond. The cysteines at positions 573 and 626 are disulfide-linked. Residues cysteine 672 and cysteine 721 are joined by a disulfide bond. Residues 750 to 770 form a helical membrane-spanning segment; sequence ITLTCTCVAATLFWLLLTLFI. At 771–1327 the chain is on the cytoplasmic side; sequence RKLKRPYFSE…SVVHYSQPSI (557 aa). In terms of domain architecture, Protein kinase spans 819 to 1151; that stretch reads LKLGKSLGHG…ELVKRLGDLL (333 aa). ATP-binding positions include 825 to 833 and lysine 853; that span reads LGHGAFGKV. Residues 950 to 971 form a disordered region; sequence ASVTSSESFASSGFQEDKSLSD. The segment covering 951–961 has biased composition (low complexity); it reads SVTSSESFASS. The Proton acceptor role is filled by aspartate 1015. Phosphotyrosine; by autocatalysis is present on residues tyrosine 1046, tyrosine 1162, tyrosine 1202, tyrosine 1231, tyrosine 1316, and tyrosine 1322.

This sequence belongs to the protein kinase superfamily. Tyr protein kinase family. CSF-1/PDGF receptor subfamily. In terms of assembly, interacts with VEGFA, VEGFB and PGF. Monomer in the absence of bound VEGFA, VEGFB or PGF. Homodimer in the presence of bound VEGFA, VEGFB and PGF. Post-translationally, autophosphorylated on tyrosine residues upon ligand binding.

It is found in the cell membrane. It localises to the endosome. Its subcellular location is the secreted. The enzyme catalyses L-tyrosyl-[protein] + ATP = O-phospho-L-tyrosyl-[protein] + ADP + H(+). Its activity is regulated as follows. Present in an inactive conformation in the absence of bound ligand. Binding of VEGFA, VEGFB or PGF leads to dimerization and activation by autophosphorylation on tyrosine residues. Tyrosine-protein kinase that acts as a cell-surface receptor for VEGFA, VEGFB and PGF, and plays an essential role in the regulation of angiogenesis, cell survival, cell migration, macrophage function, and chemotaxis. Acts as a positive regulator of postnatal retinal hyaloid vessel regression. Has very high affinity for VEGFA and relatively low protein kinase activity; may function as a negative regulator of VEGFA signaling by limiting the amount of free VEGFA and preventing its binding to KDR. Ligand binding leads to the activation of several signaling cascades. Activation of PLCG1 leads to the production of the cellular signaling molecules diacylglycerol and inositol 1,4,5-trisphosphate and the activation of protein kinase C. Mediates phosphorylation of PIK3R1, the regulatory subunit of phosphatidylinositol 3-kinase, leading to activation of phosphatidylinositol kinase and the downstream signaling pathway. Mediates activation of MAPK1/ERK2, MAPK3/ERK1 and the MAP kinase signaling pathway, as well as of the AKT1 signaling pathway. Phosphorylates PLCG1. Promotes phosphorylation of AKT1 and CBL. This is Vascular endothelial growth factor receptor 1 (FLT1) from Gallus gallus (Chicken).